The following is a 239-amino-acid chain: tRNA (guanine-N(1)-)-methyltransferase (239 aa).

Residues Gly110 and 130–135 each bind S-adenosyl-L-methionine; that span reads VGDYVL.

This sequence belongs to the RNA methyltransferase TrmD family. Homodimer.

It is found in the cytoplasm. The enzyme catalyses guanosine(37) in tRNA + S-adenosyl-L-methionine = N(1)-methylguanosine(37) in tRNA + S-adenosyl-L-homocysteine + H(+). Functionally, specifically methylates guanosine-37 in various tRNAs. This Borrelia turicatae (strain 91E135) protein is tRNA (guanine-N(1)-)-methyltransferase.